Consider the following 169-residue polypeptide: Major pepsin inhibitor 3 (169 aa).

A signal peptide spans 1 to 20 (MHVWLILSLASLWTSSIAYS). Glutamine 21 carries the pyrrolidone carboxylic acid modification. 3 disulfide bridges follow: cysteine 33–cysteine 79, cysteine 68–cysteine 86, and cysteine 99–cysteine 166. The tract at residues 135-169 (EEQQENQPPSSGMPHGAVPAGGLSPPPPPSFCTVQ) is disordered. Positions 158-169 (SPPPPPSFCTVQ) are enriched in pro residues.

It belongs to the protease inhibitor I33 family. In terms of tissue distribution, body wall.

It localises to the secreted. Functionally, this is an inhibitor of the aspartic protease pepsin. The protein is Major pepsin inhibitor 3 of Ascaris suum (Pig roundworm).